The chain runs to 1177 residues: Chromosome partition protein Smc (1177 aa).

34–41 is an ATP binding site; it reads ANGSGKSN. Residues 167-506 are a coiled coil; that stretch reads SGIAEYDSKK…IAAEAQREVR (340 aa). Positions 521-627 constitute an SMC hinge domain; sequence GIYGTLAELI…VIVNSMEEAR (107 aa). A coiled-coil region spans residues 659-1012; the sequence is LAVDTTKLRE…NEIEKEKKNV (354 aa).

It belongs to the SMC family. In terms of assembly, homodimer.

It is found in the cytoplasm. Its function is as follows. Required for chromosome condensation and partitioning. Binds single-stranded but not double-stranded DNA. The protein is Chromosome partition protein Smc of Pyrococcus furiosus (strain ATCC 43587 / DSM 3638 / JCM 8422 / Vc1).